The sequence spans 319 residues: Beta-ketoacyl-[acyl-carrier-protein] synthase III (319 aa).

Residues Cys113 and His246 contribute to the active site. The segment at 247-251 is ACP-binding; sequence QANIR. Asn276 is an active-site residue.

The protein belongs to the thiolase-like superfamily. FabH family. Homodimer.

It is found in the cytoplasm. It catalyses the reaction malonyl-[ACP] + acetyl-CoA + H(+) = 3-oxobutanoyl-[ACP] + CO2 + CoA. The protein operates within lipid metabolism; fatty acid biosynthesis. Functionally, catalyzes the condensation reaction of fatty acid synthesis by the addition to an acyl acceptor of two carbons from malonyl-ACP. Catalyzes the first condensation reaction which initiates fatty acid synthesis and may therefore play a role in governing the total rate of fatty acid production. Possesses both acetoacetyl-ACP synthase and acetyl transacylase activities. Its substrate specificity determines the biosynthesis of branched-chain and/or straight-chain of fatty acids. The polypeptide is Beta-ketoacyl-[acyl-carrier-protein] synthase III (Ehrlichia ruminantium (strain Gardel)).